A 207-amino-acid polypeptide reads, in one-letter code: MSRYRGPRLRIIRRLQNLPGLTNKLVESKKNKVSGSDQSIQKKVSQYGIRLEAKQRLRFNYGLTERQLLNYVRIARGAKGSTGQILLQLLEMRLDNILFRLGFVPTIPSARQLINHRHILVNNRIVDVPSFHCKPKDIITIGAPKTYQSILSKRLESFAKDQIPEHLTLSLSEPKKPKGFVNYLINRESIGLKINELLVVEYYSRKA.

The S4 RNA-binding domain occupies 92-153 (MRLDNILFRL…PKTYQSILSK (62 aa)).

The protein belongs to the universal ribosomal protein uS4 family. Part of the 30S ribosomal subunit. Contacts protein S5. The interaction surface between S4 and S5 is involved in control of translational fidelity.

It is found in the plastid. The protein localises to the chloroplast. In terms of biological role, one of the primary rRNA binding proteins, it binds directly to 16S rRNA where it nucleates assembly of the body of the 30S subunit. Functionally, with S5 and S12 plays an important role in translational accuracy. The chain is Small ribosomal subunit protein uS4c (rps4) from Equisetum laevigatum (Smooth horsetail).